A 5251-amino-acid polypeptide reads, in one-letter code: Dynein heavy chain-like protein 2 (5251 aa).

Kelch repeat units lie at residues 37-87, 95-143, 266-317, 318-367, and 372-421; these read GLFL…CYHN, YVII…LQNG, SLIL…IHGN, NLFI…LVES, and IIFI…QNNE. The segment at 140 to 188 is disordered; it reads LQNGINGTNEKGYISQTDDENCSDNKYGENQDYGSNDSDSKDGEDIDKD. The segment at 686–732 is disordered; the sequence is NNIEQRNNNNDNNDNNNNDNNNNNNNDNNNNNNNNNNNNNNNNDNLN. The span at 692 to 730 shows a compositional bias: low complexity; that stretch reads NNNNDNNDNNNNDNNNNNNNDNNNNNNNNNNNNNNNNDN. Coiled coils occupy residues 1155-1225 and 1544-1610; these read DNII…KKIK and KLNN…KLIS. Positions 1554-1598 are disordered; it reads EKNKNANENSNEIETNKYNKKEELTNNRDGDGDDDDNIKNDKDEK. The span at 1567–1583 shows a compositional bias: basic and acidic residues; it reads ETNKYNKKEELTNNRDG. The Kelch 6 repeat unit spans residues 1639 to 1685; that stretch reads HIKYTLKYYITNLFRLKDLFNNEKEKWIDENYLAQVFILCNTIFFVN. The segment at 1802–1825 is disordered; the sequence is HQEGKQEYNNKNNDNDNNNNNNNN. A compositionally biased stretch (low complexity) spans 1810-1825; it reads NNKNNDNDNNNNNNNN. Residue 1895-1902 coordinates ATP; sequence GPAGTGKT. Residues 2136–2188 adopt a coiled-coil conformation; sequence NDINENKKEKDNIEELKSDNVKEEKKTKKKHLEDNNNNKKKELFNLNNIEKEL. The interval 2152-2171 is disordered; the sequence is KSDNVKEEKKTKKKHLEDNN. An ATP-binding site is contributed by 2224–2231; the sequence is GEAGCGKT. The stretch at 2447 to 2494 is one Kelch 7 repeat; sequence VIWCFGGFLGEKDNVNYKKSFDKYWKNTFKSIKVNRKISVFDFYVENN. Residues 2546–2553 and 2890–2897 contribute to the ATP site; these read GKTGVGKT and GIGGCGKT. Low complexity-rich tracts occupy residues 3138–3154 and 3652–3671; these read DNNN…DGNN and DQNF…NSTN. Disordered regions lie at residues 3138-3163, 3652-3686, 4042-4250, 4280-4299, 4773-4824, and 4910-4948; these read DNNN…EGND, DQNF…NHNN, EDND…EENV, NGKI…DFEN, MDFH…ENEE, and KIIK…HSGS. Residues 4059-4086 are compositionally biased toward acidic residues; that stretch reads KMEDEEKMEEEKVDEEKMEEEKVDEEKM. The segment covering 4087–4247 has biased composition (basic and acidic residues); sequence EDEKVEEKME…EKGEEQKAEE (161 aa). 2 stretches are compositionally biased toward acidic residues: residues 4289-4299 and 4807-4823; these read DDLEEEEDFEN and DDDD…EENE. The segment covering 4912–4937 has biased composition (basic and acidic residues); the sequence is IKKEKPGDNKDNKYTHDQKKETIHKE.

This sequence belongs to the dynein heavy chain family. Consists of at least two heavy chains and a number of intermediate and light chains.

The protein localises to the cytoplasm. It is found in the cytoskeleton. Its function is as follows. Acts as a motor for the intracellular retrograde motility of vesicles and organelles along microtubules. Dynein has ATPase activity; the force-producing power stroke is thought to occur on release of ADP. In Plasmodium falciparum (isolate 3D7), this protein is Dynein heavy chain-like protein 2.